The chain runs to 213 residues: Putative thiamine-phosphate synthase (213 aa).

4-amino-2-methyl-5-(diphosphooxymethyl)pyrimidine-binding positions include 38–42 and asparagine 70; that span reads QLREK. Residue aspartate 71 coordinates Mg(2+). Serine 109 lines the 4-amino-2-methyl-5-(diphosphooxymethyl)pyrimidine pocket. 135–137 is a 2-[(2R,5Z)-2-carboxy-4-methylthiazol-5(2H)-ylidene]ethyl phosphate binding site; the sequence is TPS. A 4-amino-2-methyl-5-(diphosphooxymethyl)pyrimidine-binding site is contributed by lysine 138. 2-[(2R,5Z)-2-carboxy-4-methylthiazol-5(2H)-ylidene]ethyl phosphate contacts are provided by residues glycine 166 and 186 to 187; that span reads IS.

It belongs to the thiamine-phosphate synthase family. The cofactor is Mg(2+).

The enzyme catalyses 2-[(2R,5Z)-2-carboxy-4-methylthiazol-5(2H)-ylidene]ethyl phosphate + 4-amino-2-methyl-5-(diphosphooxymethyl)pyrimidine + 2 H(+) = thiamine phosphate + CO2 + diphosphate. It carries out the reaction 2-(2-carboxy-4-methylthiazol-5-yl)ethyl phosphate + 4-amino-2-methyl-5-(diphosphooxymethyl)pyrimidine + 2 H(+) = thiamine phosphate + CO2 + diphosphate. It catalyses the reaction 4-methyl-5-(2-phosphooxyethyl)-thiazole + 4-amino-2-methyl-5-(diphosphooxymethyl)pyrimidine + H(+) = thiamine phosphate + diphosphate. It functions in the pathway cofactor biosynthesis; thiamine diphosphate biosynthesis; thiamine phosphate from 4-amino-2-methyl-5-diphosphomethylpyrimidine and 4-methyl-5-(2-phosphoethyl)-thiazole: step 1/1. Its function is as follows. Condenses 4-methyl-5-(beta-hydroxyethyl)thiazole monophosphate (THZ-P) and 2-methyl-4-amino-5-hydroxymethyl pyrimidine pyrophosphate (HMP-PP) to form thiamine monophosphate (TMP). This is Putative thiamine-phosphate synthase (thiE) from Geobacter sulfurreducens (strain ATCC 51573 / DSM 12127 / PCA).